Reading from the N-terminus, the 131-residue chain is Profilin-3 (131 aa).

The protein belongs to the profilin family. In terms of assembly, occurs in many kinds of cells as a complex with monomeric actin in a 1:1 ratio.

The protein resides in the cytoplasm. Its subcellular location is the cytoskeleton. Functionally, binds to actin and affects the structure of the cytoskeleton. At high concentrations, profilin prevents the polymerization of actin, whereas it enhances it at low concentrations. By binding to PIP2, it inhibits the formation of IP3 and DG. In Lilium longiflorum (Trumpet lily), this protein is Profilin-3.